Consider the following 296-residue polypeptide: Cytidine deaminase (296 aa).

CMP/dCMP-type deaminase domains are found at residues 47–167 (TESE…FGPK) and 186–296 (DSSD…VDPI). A substrate-binding site is contributed by 88 to 90 (NLE). Position 101 (H101) interacts with Zn(2+). Residue E103 is the Proton donor of the active site. Zn(2+) contacts are provided by C128 and C131.

The protein belongs to the cytidine and deoxycytidylate deaminase family. As to quaternary structure, homodimer. The cofactor is Zn(2+).

It carries out the reaction cytidine + H2O + H(+) = uridine + NH4(+). The catalysed reaction is 2'-deoxycytidine + H2O + H(+) = 2'-deoxyuridine + NH4(+). Functionally, this enzyme scavenges exogenous and endogenous cytidine and 2'-deoxycytidine for UMP synthesis. This is Cytidine deaminase from Shewanella oneidensis (strain ATCC 700550 / JCM 31522 / CIP 106686 / LMG 19005 / NCIMB 14063 / MR-1).